A 435-amino-acid chain; its full sequence is Salicylate hydroxylase (435 aa).

12-41 (RVAIVGGGISGLALALSLCKHSHLNVQLFE) provides a ligand contact to FAD.

The cofactor is FAD.

It carries out the reaction salicylate + NADH + O2 + 2 H(+) = catechol + CO2 + NAD(+) + H2O. It participates in aromatic compound metabolism; naphthalene degradation. The protein is Salicylate hydroxylase (nahG) of Pseudomonas putida (Arthrobacter siderocapsulatus).